A 135-amino-acid chain; its full sequence is Interleukin-5 (135 aa).

The first 19 residues, 1 to 19 (MRVLLQLGLLALGAVCVCA), serve as a signal peptide directing secretion. Residues Asn-48, Asn-77, and Asn-91 are each glycosylated (N-linked (GlcNAc...) asparagine).

The protein belongs to the IL-5 family. As to quaternary structure, homodimer; disulfide-linked. Interacts with IL5RA. Interacts with CSF2RB.

It localises to the secreted. Its function is as follows. Homodimeric cytokine expressed predominantly by T-lymphocytes and NK cells that plays an important role in the survival, differentiation, and chemotaxis of eosinophils. Also acts on activated and resting B-cells to induce immunoglobulin production, growth, and differentiation. Mechanistically, exerts its biological effects through a receptor composed of IL5RA subunit and the cytokine receptor common subunit beta/CSF2RB. Binding to the receptor leads to activation of various kinases including LYN, SYK and JAK2 and thereby propagates signals through the RAS-MAPK and JAK-STAT5 pathways respectively. This chain is Interleukin-5 (IL5), found in Cavia porcellus (Guinea pig).